The following is a 2724-amino-acid chain: Eukaryotic translation initiation factor 2-alpha kinase 2 (2724 aa).

At 1 to 24 the chain is on the cytoplasmic side; it reads MLNMVDQKKGINNGSSTGVINNIN. Residues 25-45 traverse the membrane as a helical segment; the sequence is GKIKNEFIFMYLIAAGGFSCV. At 46–673 the chain is on the extracellular side; it reads YKIKKKKSNK…KFYIKRHNQK (628 aa). Positions 112–153 are disordered; sequence KRERRGRRKEQQREQMGDKRREKRQQQRREKRKEQNTNTKKR. The segment covering 120–146 has biased composition (basic and acidic residues); it reads KEQQREQMGDKRREKRQQQRREKRKEQ. The chain crosses the membrane as a helical span at residues 674-694; that stretch reads TYFFENIIFYHYIIMLFLDIE. At 695-718 the chain is on the cytoplasmic side; it reads KYKNKFVSLFQYNLYRKLLKISKR. Residues 719–739 form a helical membrane-spanning segment; the sequence is IVLMLHRIETNVICIFLLKHF. At 740–800 the chain is on the extracellular side; the sequence is EDYFIRKGIH…KKNIFNFFIE (61 aa). Residues 801–821 form a helical membrane-spanning segment; sequence LFLNNIQINIFKKFEILYLII. Topologically, residues 822 to 832 are cytoplasmic; the sequence is YFYNYFEKSKQ. Residues 833-853 traverse the membrane as a helical segment; that stretch reads FDIEGIGDIIYVWLSLINLFY. Residues 854–876 lie on the Extracellular side of the membrane; sequence DDKGKCIKILSKIFAKLNKKLYY. The chain crosses the membrane as a helical span at residues 877-897; sequence VYWGKLYIIMNWTTIVDTIFI. Residues 898-908 lie on the Cytoplasmic side of the membrane; it reads RNVLSINREGN. The chain crosses the membrane as a helical span at residues 909–929; it reads YYWVIIVLKMINYFVNVAYTL. Residues 930–996 are Extracellular-facing; sequence TRMDIFFIKV…KKNYDIYTKY (67 aa). Residues 997–1017 form a helical membrane-spanning segment; the sequence is AILFIYCFIIQAYYFDTLFNI. The Cytoplasmic portion of the chain corresponds to 1018–2724; it reads RSLESNEIAN…GDIFLPDKCP (1707 aa). Position 2029 (Lys2029) interacts with ATP. In terms of domain architecture, Protein kinase spans 2084–2719; it reads KHYFTKCGIL…KIISAGDIFL (636 aa). Residues 2120–2155 adopt a coiled-coil conformation; the sequence is INTLNEENQNMFCKNKEKKEENYKKIDTNISQFSEK. The active-site Proton acceptor is Asp2229. The disordered stretch occupies residues 2479-2507; it reads EKMDKNKIAAQKKKKKKENKHPIGRRSTN. Positions 2488–2502 are enriched in basic residues; that stretch reads AQKKKKKKENKHPIG.

The protein belongs to the protein kinase superfamily. Ser/Thr protein kinase family. GCN2 subfamily. Auto-phosphorylated.

Its subcellular location is the membrane. The catalysed reaction is L-seryl-[protein] + ATP = O-phospho-L-seryl-[protein] + ADP + H(+). It catalyses the reaction L-threonyl-[protein] + ATP = O-phospho-L-threonyl-[protein] + ADP + H(+). Phosphorylates translation factor eIF2alpha in salivary gland sporozoites during dormancy, which leads to an inhibition of protein translation and accumulation of stalled mRNAs into granules. This Plasmodium berghei (strain Anka) protein is Eukaryotic translation initiation factor 2-alpha kinase 2.